The chain runs to 459 residues: Glutamyl-tRNA reductase (459 aa).

Substrate contacts are provided by residues 47-50, serine 140, 145-147, and glutamine 151; these read TCNR and EPQ. The active-site Nucleophile is cysteine 48. Residue 220 to 225 participates in NADP(+) binding; it reads AAGEMN.

It belongs to the glutamyl-tRNA reductase family. As to quaternary structure, homodimer.

The enzyme catalyses (S)-4-amino-5-oxopentanoate + tRNA(Glu) + NADP(+) = L-glutamyl-tRNA(Glu) + NADPH + H(+). The protein operates within porphyrin-containing compound metabolism; protoporphyrin-IX biosynthesis; 5-aminolevulinate from L-glutamyl-tRNA(Glu): step 1/2. Its function is as follows. Catalyzes the NADPH-dependent reduction of glutamyl-tRNA(Glu) to glutamate 1-semialdehyde (GSA). This chain is Glutamyl-tRNA reductase, found in Psychrobacter arcticus (strain DSM 17307 / VKM B-2377 / 273-4).